We begin with the raw amino-acid sequence, 714 residues long: DNA ligase (714 aa).

NAD(+)-binding positions include 47-51 (DAAYD), 96-97 (SL), and Glu130. Catalysis depends on Lys132, which acts as the N6-AMP-lysine intermediate. The NAD(+) site is built by Arg153, Glu190, Lys306, and Lys330. Zn(2+) is bound by residues Cys435, Cys438, Cys453, and Cys459. Residues 636-714 (RNDSAVAGKT…EDEWLKLIEG (79 aa)) enclose the BRCT domain.

It belongs to the NAD-dependent DNA ligase family. LigA subfamily. Mg(2+) serves as cofactor. Mn(2+) is required as a cofactor.

The catalysed reaction is NAD(+) + (deoxyribonucleotide)n-3'-hydroxyl + 5'-phospho-(deoxyribonucleotide)m = (deoxyribonucleotide)n+m + AMP + beta-nicotinamide D-nucleotide.. DNA ligase that catalyzes the formation of phosphodiester linkages between 5'-phosphoryl and 3'-hydroxyl groups in double-stranded DNA using NAD as a coenzyme and as the energy source for the reaction. It is essential for DNA replication and repair of damaged DNA. The protein is DNA ligase of Nitrobacter hamburgensis (strain DSM 10229 / NCIMB 13809 / X14).